We begin with the raw amino-acid sequence, 77 residues long: Acyl carrier protein (77 aa).

One can recognise a Carrier domain in the interval 2–77 (SAIDKRVKEI…DAIDYITEHT (76 aa)). S37 is subject to O-(pantetheine 4'-phosphoryl)serine.

Belongs to the acyl carrier protein (ACP) family. Post-translationally, 4'-phosphopantetheine is transferred from CoA to a specific serine of apo-ACP by AcpS. This modification is essential for activity because fatty acids are bound in thioester linkage to the sulfhydryl of the prosthetic group.

The protein resides in the cytoplasm. Its pathway is lipid metabolism; fatty acid biosynthesis. Its function is as follows. Carrier of the growing fatty acid chain in fatty acid biosynthesis. The protein is Acyl carrier protein of Geobacter metallireducens (strain ATCC 53774 / DSM 7210 / GS-15).